Reading from the N-terminus, the 130-residue chain is Iron-sulfur cluster insertion protein ErpA (130 aa).

3 residues coordinate iron-sulfur cluster: Cys58, Cys122, and Cys124.

Belongs to the HesB/IscA family. Homodimer. Iron-sulfur cluster serves as cofactor.

In terms of biological role, required for insertion of 4Fe-4S clusters for at least IspG. The sequence is that of Iron-sulfur cluster insertion protein ErpA from Stenotrophomonas maltophilia (strain R551-3).